The sequence spans 297 residues: Probable endonuclease 4 (297 aa).

Positions 69, 110, 145, 179, 182, 214, 227, 229, and 259 each coordinate Zn(2+).

It belongs to the AP endonuclease 2 family. It depends on Zn(2+) as a cofactor.

The catalysed reaction is Endonucleolytic cleavage to 5'-phosphooligonucleotide end-products.. Endonuclease IV plays a role in DNA repair. It cleaves phosphodiester bonds at apurinic or apyrimidinic (AP) sites, generating a 3'-hydroxyl group and a 5'-terminal sugar phosphate. The sequence is that of Probable endonuclease 4 from Listeria monocytogenes serotype 4b (strain CLIP80459).